Reading from the N-terminus, the 518-residue chain is Centromere protein T (518 aa).

The tract at residues 1-70 (MADLSSPDGD…RKHSHGTGSV (70 aa)) is disordered. Basic and acidic residues predominate over residues 19-28 (HVLDTADSHT). The span at 34 to 57 (STQTNPQRRRSQTPYSKRQGSQRK) shows a compositional bias: polar residues. A Phosphothreonine modification is found at T86. Residues 94–381 (ILLTAPESST…EPHQLFEPPP (288 aa)) form a flexible stalk domain region. 3 disordered regions span residues 102–156 (STVM…KRKQ), 271–362 (VHHS…ELSS), and 375–412 (QLFEPPPSPGVAAVSSESVPAKLPSRTRTAQPRHHQDP). Polar residues predominate over residues 294–306 (TPSTGTRPQSQMS). Phosphoserine occurs at positions 313, 324, 333, 345, 346, 357, and 382. Basic and acidic residues predominate over residues 326–343 (ELREAVGSKEAEEPKDLE). The span at 384–395 (GVAAVSSESVPA) shows a compositional bias: low complexity.

The protein belongs to the CENP-T/CNN1 family. Component of the CENPA-CAD complex, composed of CENPI, CENPK, CENPL, CENPO, CENPP, CENPQ, CENPR and CENPS. The CENPA-CAD complex is probably recruited on centromeres by the CENPA-NAC complex, at least composed of CENPA, CENPC, CENPH, CENPM, CENPN, CENPT and CENPU. Identified in a centromeric complex containing histones H2A, H2B, H3 and H4, and at least CENPA, CENPB, CENPC, CENPT, CENPN, HJURP, SUPT16H, SSRP1 and RSF1. Interacts (via N-terminus) with the NDC80 complex. Heterodimer with CENPW; this dimer coassembles with CENPS-CENPX heterodimers at centromeres to form the tetrameric CENP-T-W-S-X complex. In terms of processing, dynamically phosphorylated during the cell cycle. Phosphorylated during G2 phase, metaphase and anaphase, but not during telophase or G1 phase.

The protein resides in the nucleus. The protein localises to the chromosome. It localises to the centromere. Its subcellular location is the kinetochore. In terms of biological role, component of the CENPA-NAC (nucleosome-associated) complex, a complex that plays a central role in assembly of kinetochore proteins, mitotic progression and chromosome segregation. The CENPA-NAC complex recruits the CENPA-CAD (nucleosome distal) complex and may be involved in incorporation of newly synthesized CENPA into centromeres. Part of a nucleosome-associated complex that binds specifically to histone H3-containing nucleosomes at the centromere, as opposed to nucleosomes containing CENPA. Component of the heterotetrameric CENP-T-W-S-X complex that binds and supercoils DNA, and plays an important role in kinetochore assembly. CENPT has a fundamental role in kinetochore assembly and function. It is one of the inner kinetochore proteins, with most further proteins binding downstream. Required for normal chromosome organization and normal progress through mitosis. This is Centromere protein T (Cenpt) from Rattus norvegicus (Rat).